The following is a 230-amino-acid chain: 2-C-methyl-D-erythritol 4-phosphate cytidylyltransferase (230 aa).

This sequence belongs to the IspD/TarI cytidylyltransferase family. IspD subfamily.

It carries out the reaction 2-C-methyl-D-erythritol 4-phosphate + CTP + H(+) = 4-CDP-2-C-methyl-D-erythritol + diphosphate. The protein operates within isoprenoid biosynthesis; isopentenyl diphosphate biosynthesis via DXP pathway; isopentenyl diphosphate from 1-deoxy-D-xylulose 5-phosphate: step 2/6. Its function is as follows. Catalyzes the formation of 4-diphosphocytidyl-2-C-methyl-D-erythritol from CTP and 2-C-methyl-D-erythritol 4-phosphate (MEP). This is 2-C-methyl-D-erythritol 4-phosphate cytidylyltransferase from Synechocystis sp. (strain ATCC 27184 / PCC 6803 / Kazusa).